Here is a 477-residue protein sequence, read N- to C-terminus: Dihydrolipoyl dehydrogenase (477 aa).

FAD-binding positions include 41-50, Lys59, Gly124, and 153-155; these read EKRGALGGTC and TGS. Cysteines 50 and 55 form a disulfide. Residues 190-197, Glu213, Val248, and Gly282 contribute to the NAD(+) site; that span reads GGGVIGLE. FAD is bound by residues Asp323 and 330 to 333; that span reads MLAH. His456 functions as the Proton acceptor in the catalytic mechanism.

Belongs to the class-I pyridine nucleotide-disulfide oxidoreductase family. As to quaternary structure, homodimer. The cofactor is FAD.

It catalyses the reaction N(6)-[(R)-dihydrolipoyl]-L-lysyl-[protein] + NAD(+) = N(6)-[(R)-lipoyl]-L-lysyl-[protein] + NADH + H(+). This is Dihydrolipoyl dehydrogenase (LPD) from Trypanosoma cruzi.